A 155-amino-acid chain; its full sequence is Transcriptional repressor NrdR (155 aa).

Residues 3–34 (CPFCGHSSTQVLDSRVSEDGDTVRRRRRCEAC) fold into a zinc finger. One can recognise an ATP-cone domain in the interval 49-139 (PAIVKKNGSR…VYRSFEDVSE (91 aa)).

Belongs to the NrdR family. It depends on Zn(2+) as a cofactor.

In terms of biological role, negatively regulates transcription of bacterial ribonucleotide reductase nrd genes and operons by binding to NrdR-boxes. This chain is Transcriptional repressor NrdR, found in Cupriavidus metallidurans (strain ATCC 43123 / DSM 2839 / NBRC 102507 / CH34) (Ralstonia metallidurans).